We begin with the raw amino-acid sequence, 61 residues long: Metallothionein-1 (61 aa).

Residue methionine 1 is modified to N-acetylmethionine. The beta stretch occupies residues 1–29; sequence MDPNCSCPTGGSCTCAGSCKCKACRCPSC. The a divalent metal cation site is built by cysteine 5, cysteine 7, cysteine 13, cysteine 15, cysteine 19, cysteine 21, cysteine 24, cysteine 26, cysteine 29, cysteine 33, cysteine 34, cysteine 36, cysteine 37, cysteine 41, cysteine 44, cysteine 48, cysteine 50, cysteine 57, cysteine 59, and cysteine 60. Residues 30–61 form an alpha region; the sequence is KKSCCSCCPVGCAKCAQGCVCKGASDKCSCCA.

Belongs to the metallothionein superfamily. Type 1 family. Monomer.

Metallothioneins have a high content of cysteine residues that bind various heavy metals; these proteins are transcriptionally regulated by both heavy metals and glucocorticoids. This Bos taurus (Bovine) protein is Metallothionein-1 (MT1).